A 402-amino-acid polypeptide reads, in one-letter code: Phytoene synthase 2, chloroplastic (402 aa).

Residues 1-54 (MAAGSSAVWAAQHPACSGGKFHHLSPSHSHCRPRRALQTPPALPARRSGASPPR) constitute a chloroplast transit peptide. Basic residues predominate over residues 20–35 (KFHHLSPSHSHCRPRR). Residues 20 to 54 (KFHHLSPSHSHCRPRRALQTPPALPARRSGASPPR) form a disordered region. A compositionally biased stretch (low complexity) spans 44 to 54 (PARRSGASPPR).

It belongs to the phytoene/squalene synthase family. As to expression, expressed in leaves and endosperm.

Its subcellular location is the plastid. The protein localises to the chloroplast. It is found in the plastoglobule. The enzyme catalyses 2 (2E,6E,10E)-geranylgeranyl diphosphate = 15-cis-phytoene + 2 diphosphate. In terms of biological role, catalyzes the conversion of geranylgeranyl diphosphate to phytoene. Mediates the first committed step in carotenoid biosynthesis. The polypeptide is Phytoene synthase 2, chloroplastic (Zea mays (Maize)).